Reading from the N-terminus, the 141-residue chain is Nucleoside diphosphate kinase (141 aa).

Positions 11, 59, 87, 93, 104, and 114 each coordinate ATP. H117 functions as the Pros-phosphohistidine intermediate in the catalytic mechanism.

The protein belongs to the NDK family. Homotetramer. Mg(2+) serves as cofactor.

Its subcellular location is the cytoplasm. The catalysed reaction is a 2'-deoxyribonucleoside 5'-diphosphate + ATP = a 2'-deoxyribonucleoside 5'-triphosphate + ADP. It carries out the reaction a ribonucleoside 5'-diphosphate + ATP = a ribonucleoside 5'-triphosphate + ADP. Functionally, major role in the synthesis of nucleoside triphosphates other than ATP. The ATP gamma phosphate is transferred to the NDP beta phosphate via a ping-pong mechanism, using a phosphorylated active-site intermediate. This is Nucleoside diphosphate kinase from Photorhabdus laumondii subsp. laumondii (strain DSM 15139 / CIP 105565 / TT01) (Photorhabdus luminescens subsp. laumondii).